We begin with the raw amino-acid sequence, 133 residues long: NADPH-dependent 7-cyano-7-deazaguanine reductase (133 aa).

Catalysis depends on cysteine 48, which acts as the Thioimide intermediate. Aspartate 55 (proton donor) is an active-site residue. Residues 70 to 72 (VEL) and 89 to 90 (QE) each bind substrate.

It belongs to the GTP cyclohydrolase I family. QueF type 1 subfamily.

The protein resides in the cytoplasm. The catalysed reaction is 7-aminomethyl-7-carbaguanine + 2 NADP(+) = 7-cyano-7-deazaguanine + 2 NADPH + 3 H(+). It functions in the pathway tRNA modification; tRNA-queuosine biosynthesis. Functionally, catalyzes the NADPH-dependent reduction of 7-cyano-7-deazaguanine (preQ0) to 7-aminomethyl-7-deazaguanine (preQ1). This chain is NADPH-dependent 7-cyano-7-deazaguanine reductase, found in Thermoanaerobacter pseudethanolicus (strain ATCC 33223 / 39E) (Clostridium thermohydrosulfuricum).